A 215-amino-acid chain; its full sequence is Adenylyl-sulfate kinase (215 aa).

Residue 46 to 53 (GLSGAGKS) coordinates ATP. The active-site Phosphoserine intermediate is Ser120.

Belongs to the APS kinase family.

The enzyme catalyses adenosine 5'-phosphosulfate + ATP = 3'-phosphoadenylyl sulfate + ADP + H(+). It functions in the pathway sulfur metabolism; hydrogen sulfide biosynthesis; sulfite from sulfate: step 2/3. Functionally, catalyzes the synthesis of activated sulfate. The polypeptide is Adenylyl-sulfate kinase (cysC) (Vibrio cholerae serotype O1 (strain ATCC 39315 / El Tor Inaba N16961)).